A 409-amino-acid polypeptide reads, in one-letter code: Elongation factor Tu (409 aa).

Positions 10-214 constitute a tr-type G domain; sequence KPHVNVGTIG…AVDSYIPTPE (205 aa). Residues 19 to 26 form a G1 region; it reads GHVDHGKT. 19–26 lines the GTP pocket; that stretch reads GHVDHGKT. Mg(2+) is bound at residue Thr-26. The tract at residues 60 to 64 is G2; sequence GITIN. A G3 region spans residues 81–84; sequence DCPG. Residues 81–85 and 136–139 each bind GTP; these read DCPGH and NKVD. The tract at residues 136–139 is G4; sequence NKVD. The G5 stretch occupies residues 174–176; it reads SAL.

The protein belongs to the TRAFAC class translation factor GTPase superfamily. Classic translation factor GTPase family. EF-Tu/EF-1A subfamily. Monomer.

The protein resides in the cytoplasm. It carries out the reaction GTP + H2O = GDP + phosphate + H(+). In terms of biological role, GTP hydrolase that promotes the GTP-dependent binding of aminoacyl-tRNA to the A-site of ribosomes during protein biosynthesis. This chain is Elongation factor Tu, found in Synechococcus sp. (strain JA-3-3Ab) (Cyanobacteria bacterium Yellowstone A-Prime).